A 999-amino-acid chain; its full sequence is Multiple C2 and transmembrane domain-containing protein 1 (999 aa).

Positions 1 to 19 (MEPRAAAAGEPEPPAASSS) are enriched in low complexity. The disordered stretch occupies residues 1-241 (MEPRAAAAGE…TGEEHGSSQK (241 aa)). Positions 34–44 (RSKGGGGGRAG) are enriched in gly residues. Residues 65 to 79 (GNAPARGSGAGSRWS) show a composition bias toward low complexity. Polar residues predominate over residues 92–101 (FSSSQPNLCC). Low complexity-rich tracts occupy residues 131–141 (PAVKGPAAASG) and 149–169 (GGRS…LSSS). Basic and acidic residues-rich tracts occupy residues 175–185 (RGDRARDEGAR) and 228–238 (RAPETGEEHGS). C2 domains follow at residues 242-360 (IINT…DVTL), 452-569 (QTQS…KLEL), and 603-724 (QKER…AYVL). Ca(2+) contacts are provided by aspartate 277, aspartate 283, aspartate 330, aspartate 332, aspartate 338, aspartate 486, aspartate 492, aspartate 539, aspartate 541, aspartate 547, aspartate 642, aspartate 648, aspartate 694, aspartate 696, and aspartate 702. Transmembrane regions (helical) follow at residues 811-831 (FVLF…LVLL) and 914-934 (PFLS…LYCI).

This sequence belongs to the MCTP family. It depends on Ca(2+) as a cofactor.

Its subcellular location is the cytoplasmic vesicle. It localises to the secretory vesicle. The protein resides in the synaptic vesicle membrane. The protein localises to the recycling endosome. It is found in the endoplasmic reticulum membrane. Its function is as follows. Calcium sensor which is essential for the stabilization of normal baseline neurotransmitter release and for the induction and long-term maintenance of presynaptic homeostatic plasticity. This chain is Multiple C2 and transmembrane domain-containing protein 1 (MCTP1), found in Homo sapiens (Human).